Reading from the N-terminus, the 2514-residue chain is Highly reducing polyketide synthase sphB (2514 aa).

A Ketosynthase family 3 (KS3) domain is found at 66–486 (QVPIAICGMA…GANAHVILES (421 aa)). Residues cysteine 238, histidine 374, and histidine 409 each act as for beta-ketoacyl synthase activity in the active site. One can recognise a Malonyl-CoA:ACP transacylase (MAT) domain in the interval 580-904 (MVFTGQGAQW…AIGALHSLNV (325 aa)). The N-terminal hotdog fold stretch occupies residues 950 to 1079 (HDLLGARVAE…GEVCAQSSAP (130 aa)). Residues 950–1240 (HDLLGARVAE…AADISDTHAA (291 aa)) form the PKS/mFAS DH domain. Histidine 982 (proton acceptor; for dehydratase activity) is an active-site residue. Positions 1089–1240 (PRTLNVRKWY…AADISDTHAA (152 aa)) are C-terminal hotdog fold. The Proton donor; for dehydratase activity role is filled by aspartate 1150. Residues 1319-1578 (WTGLDHEAIS…EPHQVTTTMV (260 aa)) form a methyltransferase (CMet) domain region. One can recognise an Enoyl reductase (ER) domain in the interval 1779–2092 (GRVNSLHYAR…KGQHIGRVGV (314 aa)). Positions 2120–2297 (ASYLMVGGLG…ASVVDMGAVE (178 aa)) constitute a Ketoreductase (KR) domain. In terms of domain architecture, Carrier spans 2427–2504 (EAAKLFAVEI…ILGQYAANEV (78 aa)). Residue serine 2464 is modified to O-(pantetheine 4'-phosphoryl)serine.

Pantetheine 4'-phosphate is required as a cofactor.

It carries out the reaction holo-[ACP] + 8 malonyl-CoA + acetyl-CoA + 5 AH2 + 8 NADPH + 16 H(+) = (3R)-hydroxyoctadeca-4,10-dienoyl-[ACP] + 5 A + 8 CO2 + 8 NADP(+) + 9 CoA + 7 H2O. Its pathway is secondary metabolite biosynthesis. Highly reducing polyketide synthase; part of the gene cluster that mediates the biosynthesis of sphingofungins, bioactive molecules acting as sphingolipid inhibitors via inhibiting serine palmitoyl transferase (SPT). Within the pathway, sphB catalyzes the first step of sphingofungin biosynthesis by condensing 8 units of malonyl-CoA with one starter unit of acetyl-CoA, leading to an C18 polyketide precursor 3-hydroxyoctadeca-4,10-dienoyl-ACP containing one delta-6 desaturation and one delta-12 desaturation. The PKS sphB does not contain any putative thioesterase domain for releasing the nascent polyketide chain and it has been suggested that aminoacyl transferases can facilitate the polyketide chain release. The aminoacyl transferase sphA uses the sphB product to produce 3-keto-presphingofungin by adding an aminomalonate molecule. SphF then reduces the C-3 ketone of 3-keto-presphingofungin which leads to presphingofungin. The cytochrome P450 monooxygenase sphH converts presphingofungin into sphingofungin B1 which is further converted to sphingofungin B by the dioxygenase sphC. SphC is also able to convert presphingofungin into sphingofungin B2. The acetyltransferase sphE acetylates sphingofungin B to produce sphingofungin C, but can also convert sphingofungin B1 into sphingofungin C1 and sphingofungin B2 into sphingofungin C2. Finally, sphingofungin C can be spontaneously converted into sphingofungin D. The chain is Highly reducing polyketide synthase sphB from Aspergillus fumigatus (strain CBS 144.89 / FGSC A1163 / CEA10) (Neosartorya fumigata).